Consider the following 318-residue polypeptide: Porphobilinogen deaminase (318 aa).

Position 245 is an S-(dipyrrolylmethanemethyl)cysteine (Cys245).

The protein belongs to the HMBS family. As to quaternary structure, monomer. Dipyrromethane serves as cofactor.

The catalysed reaction is 4 porphobilinogen + H2O = hydroxymethylbilane + 4 NH4(+). It functions in the pathway porphyrin-containing compound metabolism; protoporphyrin-IX biosynthesis; coproporphyrinogen-III from 5-aminolevulinate: step 2/4. It participates in porphyrin-containing compound metabolism; chlorophyll biosynthesis. Functionally, tetrapolymerization of the monopyrrole PBG into the hydroxymethylbilane pre-uroporphyrinogen in several discrete steps. This is Porphobilinogen deaminase from Prochlorococcus marinus (strain MIT 9215).